A 353-amino-acid polypeptide reads, in one-letter code: E3 ubiquitin-protein ligase Os03g0188200 (353 aa).

The helical transmembrane segment at 48-68 (VVVLVALITAFVLLTVFSVLI) threads the bilayer. The RING-type; atypical zinc finger occupies 133–175 (CAVCLAEFADSDELRVLPACCHVFHPDCIDPWLAAAVTCPLCR). Composition is skewed to basic and acidic residues over residues 308–318 (ADWDAGEEHGG) and 340–353 (GSKE…LNRV). The disordered stretch occupies residues 308 to 353 (ADWDAGEEHGGSKRVHPVAGAQDETPSGSGSDGSKENSDSDALNRV).

The protein localises to the membrane. The catalysed reaction is S-ubiquitinyl-[E2 ubiquitin-conjugating enzyme]-L-cysteine + [acceptor protein]-L-lysine = [E2 ubiquitin-conjugating enzyme]-L-cysteine + N(6)-ubiquitinyl-[acceptor protein]-L-lysine.. Its pathway is protein modification; protein ubiquitination. Functionally, possesses E3 ubiquitin-protein ligase in vitro. The chain is E3 ubiquitin-protein ligase Os03g0188200 from Oryza sativa subsp. japonica (Rice).